Here is a 398-residue protein sequence, read N- to C-terminus: Odorant receptor 24a (398 aa).

Residues 1–14 (MLPRFLTASYPMER) are Cytoplasmic-facing. Residues 15-31 (HYFMVPKFALSLIGFYP) form a helical membrane-spanning segment. Residues 32-46 (EQKRTVLVKLWSFFN) are Extracellular-facing. The chain crosses the membrane as a helical span at residues 47–67 (FFILTYGCYAEAYYGIHYIPI). The Cytoplasmic portion of the chain corresponds to 68-74 (NIATALD). The chain crosses the membrane as a helical span at residues 75-95 (ALCPVASSILSLVKMVAIWWY). The Extracellular segment spans residues 96 to 124 (QDELRSLIERVRFLTEQQKSKRKLGYKKR). Residues 125-145 (FYTLATQLTFLLLCCGFCTST) traverse the membrane as a helical segment. The Cytoplasmic segment spans residues 146 to 199 (SYSVRHLIDNILRRTHGKDWIYETPFKMMFPDLLLRLPLYPITYILVHWHGYIT). Residues 200–220 (VVCFVGADGFFLGFCLYFTVL) form a helical membrane-spanning segment. At 221–269 (LLCLQDDVCDLLEVENIEKSPSEAEEARIVREMEKLVDRHNEVAELTER) the chain is on the extracellular side. A helical membrane pass occupies residues 270 to 290 (LSGVMVEITLAHFVTSSLIIG). At 291–295 (TSVVD) the chain is on the cytoplasmic side. A helical transmembrane segment spans residues 296–316 (ILLFSGLGIIVYVVYTCAVGV). Topologically, residues 317–398 (EIFLYCLGGS…SLIALAKSVI (82 aa)) are extracellular.

Belongs to the insect chemoreceptor superfamily. Heteromeric odorant receptor channel (TC 1.A.69) family. Or1a subfamily. In terms of assembly, interacts with Orco. Complexes exist early in the endomembrane system in olfactory sensory neurons (OSNs), coupling these complexes to the conserved ciliary trafficking pathway. In terms of tissue distribution, not expressed in either the antenna or maxillary palp.

The protein localises to the cell membrane. Its function is as follows. Odorant receptor which mediates acceptance or avoidance behavior, depending on its substrates. The odorant receptor repertoire encodes a large collection of odor stimuli that vary widely in identity, intensity, and duration. May form a complex with Orco to form odorant-sensing units, providing sensitive and prolonged odorant signaling and calcium permeability. Involved in the behavioral responses to pentanol, hexanol, octanol, nonanol, propyl acetate, butyl acetate, isoamyl acetate, methyl caproate, anisole, heptanal, 2-heptanone, r-carvone, and nonanoic acid. Also responds to pyrazines. This is Odorant receptor 24a (Or24a) from Drosophila melanogaster (Fruit fly).